Consider the following 77-residue polypeptide: Acyl carrier protein (77 aa).

The Carrier domain maps to 2 to 77 (STVEERVKKI…DAIDYILANQ (76 aa)). At Ser37 the chain carries O-(pantetheine 4'-phosphoryl)serine.

The protein belongs to the acyl carrier protein (ACP) family. Post-translationally, 4'-phosphopantetheine is transferred from CoA to a specific serine of apo-ACP by AcpS. This modification is essential for activity because fatty acids are bound in thioester linkage to the sulfhydryl of the prosthetic group.

The protein localises to the cytoplasm. It participates in lipid metabolism; fatty acid biosynthesis. Carrier of the growing fatty acid chain in fatty acid biosynthesis. This Hahella chejuensis (strain KCTC 2396) protein is Acyl carrier protein.